Reading from the N-terminus, the 553-residue chain is Putative transport protein YidE (553 aa).

Helical transmembrane passes span 4-24 (IALT…IGNI), 28-48 (GVGF…HFVD), 65-85 (FGLI…FFAS), 95-115 (LFAV…HKIF), and 158-178 (MSYA…MWLM). RCK C-terminal domains are found at residues 192–276 (KHES…VIGK) and 279–361 (DTSL…VVGN). Transmembrane regions (helical) follow at residues 371-391 (MLPV…PLFV), 393-413 (GFPV…ALIL), 437-457 (LGIV…FVDT), 464-484 (LSWI…VGLL), 493-513 (YLTL…LAFA), and 533-553 (LVMF…WGMG).

It belongs to the AAE transporter (TC 2.A.81) family. YidE subfamily.

Its subcellular location is the cell membrane. This is Putative transport protein YidE from Salmonella newport (strain SL254).